Here is a 138-residue protein sequence, read N- to C-terminus: Ribulose bisphosphate carboxylase small subunit (138 aa).

Belongs to the RuBisCO small chain family. Heterohexadecamer of 8 large and 8 small subunits.

The protein resides in the plastid. The protein localises to the chloroplast. Functionally, ruBisCO catalyzes two reactions: the carboxylation of D-ribulose 1,5-bisphosphate, the primary event in carbon dioxide fixation, as well as the oxidative fragmentation of the pentose substrate in the photorespiration process. Both reactions occur simultaneously and in competition at the same active site. Although the small subunit is not catalytic it is essential for maximal activity. The polypeptide is Ribulose bisphosphate carboxylase small subunit (Porphyridium aerugineum (Red microalga)).